The primary structure comprises 331 residues: 6-phosphogluconolactonase (331 aa).

Lys-287 is subject to N6-acetyllysine.

It belongs to the cycloisomerase 2 family.

The catalysed reaction is 6-phospho-D-glucono-1,5-lactone + H2O = 6-phospho-D-gluconate + H(+). It functions in the pathway carbohydrate degradation; pentose phosphate pathway; D-ribulose 5-phosphate from D-glucose 6-phosphate (oxidative stage): step 2/3. Catalyzes the hydrolysis of 6-phosphogluconolactone to 6-phosphogluconate. The chain is 6-phosphogluconolactonase from Escherichia coli O157:H7.